We begin with the raw amino-acid sequence, 585 residues long: Cytoplasmic polyadenylation element-binding protein 1 (585 aa).

The disordered stretch occupies residues 1-32; the sequence is MQHQLKACGDVKTSSRAQQNHRRSTAASAKRS. RRM domains follow at residues 251 to 356 and 373 to 444; these read RKVF…PWRL and RTVF…HAET. Positions 513-533 are disordered; the sequence is DQTRILPRPPHHPAAHHSHQR. Over residues 521 to 532 the composition is skewed to basic residues; sequence PPHHPAAHHSHQ.

As to quaternary structure, interacts with fbf-1.

Cytoplasmic polyadenylation element binding protein that binds to and regulates the translation of specific mRNAs. Essential for progression through meiosis. Involved in spermatogenesis. The chain is Cytoplasmic polyadenylation element-binding protein 1 (cpb-1) from Caenorhabditis briggsae.